A 154-amino-acid chain; its full sequence is MSNSLAVVRLDPGLPLPSRAHDGDAGVDLYSAEDVVLPPGQRALVRTGVAVAIPFGMVGLVHPRSGLASRVGLSIVNSPGTIDAGYRGELKVALINLDPATPIVVNRGDRIAQLLVQRVELLELVEVSSFDEAGLAATSRGDGGHGSSGGHASL.

Substrate-binding positions include Arg64–Gly66, Asn77, Thr81–Asp83, and Lys91.

The protein belongs to the dUTPase family. In terms of assembly, homotrimer. It depends on Mg(2+) as a cofactor.

The enzyme catalyses dUTP + H2O = dUMP + diphosphate + H(+). Its pathway is pyrimidine metabolism; dUMP biosynthesis; dUMP from dCTP (dUTP route): step 2/2. Functionally, this enzyme is involved in nucleotide metabolism: it produces dUMP, the immediate precursor of thymidine nucleotides and it decreases the intracellular concentration of dUTP so that uracil cannot be incorporated into DNA. The polypeptide is Deoxyuridine 5'-triphosphate nucleotidohydrolase (Mycobacterium marinum (strain ATCC BAA-535 / M)).